A 473-amino-acid chain; its full sequence is 23S rRNA (uracil(1939)-C(5))-methyltransferase RlmD (473 aa).

The segment at 6 to 27 (KPSKGKNKSNVKGRVRGAGSGE) is disordered. The span at 8–20 (SKGKNKSNVKGRV) shows a compositional bias: basic residues. Residues 42–99 (DDINAANEAVTIDGMDWQGQGVARGDTLYFVDGALPGETVEIKALSSNKQIVNAKVTK) enclose the TRAM domain. Positions 112, 118, 121, and 199 each coordinate [4Fe-4S] cluster. Residues Gln304, Phe333, Asn338, Glu354, Asp381, and Asp402 each contribute to the S-adenosyl-L-methionine site. The Nucleophile role is filled by Cys428.

The protein belongs to the class I-like SAM-binding methyltransferase superfamily. RNA M5U methyltransferase family. RlmD subfamily.

It carries out the reaction uridine(1939) in 23S rRNA + S-adenosyl-L-methionine = 5-methyluridine(1939) in 23S rRNA + S-adenosyl-L-homocysteine + H(+). In terms of biological role, catalyzes the formation of 5-methyl-uridine at position 1939 (m5U1939) in 23S rRNA. The sequence is that of 23S rRNA (uracil(1939)-C(5))-methyltransferase RlmD from Alteromonas naphthalenivorans.